Reading from the N-terminus, the 748-residue chain is Long-chain-alcohol oxidase FAO4B (748 aa).

Residues 1 to 18 are compositionally biased toward basic residues; sequence MEDVRRRNRGHPLLRSKK. Residues 1 to 25 are disordered; sequence MEDVRRRNRGHPLLRSKKRGEGYNH. 2 consecutive transmembrane segments (helical) span residues 89-109 and 140-160; these read IILM…SLCL and FLLP…FYFF. An FAD-binding site is contributed by 238–253; it reads CDAVVVGSGSGGGVAA. The Proton acceptor role is filled by histidine 679.

It belongs to the GMC oxidoreductase family.

The protein resides in the membrane. The catalysed reaction is a long-chain primary fatty alcohol + O2 = a long-chain fatty aldehyde + H2O2. Its function is as follows. Long-chain fatty alcohol oxidase involved in the omega-oxidation pathway of lipid degradation. The chain is Long-chain-alcohol oxidase FAO4B (FAO4B) from Arabidopsis thaliana (Mouse-ear cress).